We begin with the raw amino-acid sequence, 758 residues long: MAILSHTLGFPRVGLHRELKKAQESYWAGNISQQQLLETGRELRARHWQQQKDAGVDLLPVGDFAWYDHVLTTSLMLDNVPARHRSGANESDIDTLFRIGRGRAPTGEPAAAAEMTKWFNTNYHYMVPEFTLGQQFRLGWTQLLDEVDEALALGHRVKPVLLGPVSYLWLGKVKGEAFDRLSLLPALLPVYKQVLGELAKRGVDWVQIDEQALVLELPQAWREAYREAYQALQGQTKLLLTTYFDSIRHQLDIITALPVQGLHVDLVAGDDDLTELHRQLPAEWVLSAGVINGRNVWRADLQSWFEQLRPLLGKRELWLGSSCSLLHSPIDLSTETQLDEEVKSWFAFALQKCAELGLLRAALNAPDEANQARLGEYSAPIRARRHSSRVHNPEVKARLEKITAADSQRQQPYAARAALQRARFKLPAWPTTTIGSFPQTTEIRGLRLDFKRGRLDGGHYRTGISEHIKQAIVEQERLGLDVLVHGEAERNDMVEYFGEHLDGFVFTQNGWVQSYGSRCVKPPIIIGDISRPEAITIEWARYAQSLTAKPVKGMLTGPVTILCWSFPREDVSRKTIARQIALALRDEVADLEQAGIGVIQIDEPALREGLPLKHSAWQDYLTWAVEAFRLNAAVAQDDTQIHTHMCYCEFNDIMDSIAALDADVITIETSRSDMELLETFKEFDYPNEIGPGVYDIHSPNVPSEEWIVELLRKAAQRIPAERLWVNPDCGLKTRAWPETRQSLANMVTAARKLREEQP.

Residues 17–20 (RELK) and Lys117 contribute to the 5-methyltetrahydropteroyltri-L-glutamate site. Residues 434 to 436 (IGS) and Glu487 each bind L-homocysteine. L-methionine contacts are provided by residues 434–436 (IGS) and Glu487. 5-methyltetrahydropteroyltri-L-glutamate-binding positions include 518 to 519 (RC) and Trp564. Asp602 contributes to the L-homocysteine binding site. Asp602 is an L-methionine binding site. Glu608 is a 5-methyltetrahydropteroyltri-L-glutamate binding site. Zn(2+)-binding residues include His644, Cys646, and Glu668. His697 (proton donor) is an active-site residue. Residue Cys729 coordinates Zn(2+).

It belongs to the vitamin-B12 independent methionine synthase family. It depends on Zn(2+) as a cofactor.

It carries out the reaction 5-methyltetrahydropteroyltri-L-glutamate + L-homocysteine = tetrahydropteroyltri-L-glutamate + L-methionine. It functions in the pathway amino-acid biosynthesis; L-methionine biosynthesis via de novo pathway; L-methionine from L-homocysteine (MetE route): step 1/1. Functionally, catalyzes the transfer of a methyl group from 5-methyltetrahydrofolate to homocysteine resulting in methionine formation. The polypeptide is 5-methyltetrahydropteroyltriglutamate--homocysteine methyltransferase (Sodalis glossinidius (strain morsitans)).